The primary structure comprises 102 residues: Legumin-like protein Mac i 2 (102 aa).

Belongs to the 11S seed storage protein (globulins) family.

In terms of biological role, seed storage protein. This Macadamia integrifolia (Macadamia nut) protein is Legumin-like protein Mac i 2.